The chain runs to 331 residues: D-alanine--D-alanine ligase (331 aa).

The 207-residue stretch at 122-328 folds into the ATP-grasp domain; the sequence is KLWYDAIGIP…FHEFLADCIE (207 aa). 152–207 is a binding site for ATP; the sequence is AFDKWGKLFVKAARQGSSVGCYSVTNIEQLSDAIDKAFGFSHQVLVEKAVKPRELE. The Mg(2+) site is built by D282, E295, and N297.

Belongs to the D-alanine--D-alanine ligase family. Requires Mg(2+) as cofactor. The cofactor is Mn(2+).

It is found in the cytoplasm. The enzyme catalyses 2 D-alanine + ATP = D-alanyl-D-alanine + ADP + phosphate + H(+). The protein operates within cell wall biogenesis; peptidoglycan biosynthesis. Functionally, cell wall formation. In Vibrio vulnificus (strain YJ016), this protein is D-alanine--D-alanine ligase.